A 455-amino-acid polypeptide reads, in one-letter code: Anaerobic glycerol-3-phosphate dehydrogenase subunit B (455 aa).

The protein belongs to the anaerobic G-3-P dehydrogenase subunit B family. In terms of assembly, composed of a catalytic GlpA/B dimer and of membrane bound GlpC. It depends on FMN as a cofactor.

It catalyses the reaction a quinone + sn-glycerol 3-phosphate = dihydroxyacetone phosphate + a quinol. It functions in the pathway polyol metabolism; glycerol degradation via glycerol kinase pathway; glycerone phosphate from sn-glycerol 3-phosphate (anaerobic route): step 1/1. Conversion of glycerol 3-phosphate to dihydroxyacetone. Uses fumarate or nitrate as electron acceptor. The chain is Anaerobic glycerol-3-phosphate dehydrogenase subunit B from Aliivibrio fischeri (strain ATCC 700601 / ES114) (Vibrio fischeri).